A 569-amino-acid polypeptide reads, in one-letter code: Acyl-CoA transferase FVEG_12629 (569 aa).

It belongs to the CoA-transferase III family.

Acyl-CoA transferase; part of the Fusarium detoxification of benzoxazolinone cluster 2 (FDB2) involved in the degradation of benzoxazolinones produced by the host plant. Maize, wheat, and rye produce the 2 benzoxazinone phytoanticipins 2,4-dihy-droxy-7-methoxy-1,4-benzoxazin-3-one (DIMBOA) and 2,4-dihydroxy-1,4-benzoxazin-3-one (DIBOA) that, due to their inherent instability once released, spontaneously degrade to the more stable corresponding benzoxazolinones, 6-methoxy-2-benzoxazolinone (MBOA) and 2-benzoxazolinone (BOA), respectively. The first step in the detoxification of benzoxazolinones involves the hydrolysis of the cyclic ester bond of benzoxazolinones by the FDB1 cluster gamma-lactamase MBL1 to aminophenols. MBL1 is able to convert BOA into 2-aminophenol (2-AP), as well as MBOA into 5-methoxy-2-aminophenol (2-AMP). The FDB2 cluster N-malonyltransferase FDB2/NAT1 then metabolizes aminophenols via N-malonylation to non-toxic malonamic acids. FDB2/NAT1 converts 2-AP into N-(2-hydroxyphenyl) malonamic acid (HPMA) and 2-AMP into N-(2-hydroxy-4-methoxyphenyl) malonamic acid (HMPMA). The duplicated dienlactone hydrolases DLH1 and DLH2 may provide redundant function for hydrolyzing the lactone moiety in the BOA molecule. The roles of the amidases an other enzymes encoded by the 2 FDB clusters have not been identified so far. The protein is Acyl-CoA transferase FVEG_12629 of Gibberella moniliformis (strain M3125 / FGSC 7600) (Maize ear and stalk rot fungus).